Reading from the N-terminus, the 387-residue chain is 1-deoxy-D-xylulose 5-phosphate reductoisomerase (387 aa).

NADPH is bound by residues threonine 11, glycine 12, serine 13, isoleucine 14, glycine 37, arginine 39, and asparagine 123. Lysine 124 contributes to the 1-deoxy-D-xylulose 5-phosphate binding site. NADPH is bound at residue glutamate 125. Residue aspartate 147 coordinates Mn(2+). 1-deoxy-D-xylulose 5-phosphate-binding residues include serine 148, glutamate 149, serine 173, and histidine 196. Glutamate 149 is a Mn(2+) binding site. Glycine 202 contributes to the NADPH binding site. The 1-deoxy-D-xylulose 5-phosphate site is built by serine 209, asparagine 214, lysine 215, and glutamate 218. Glutamate 218 contacts Mn(2+).

The protein belongs to the DXR family. Mg(2+) is required as a cofactor. It depends on Mn(2+) as a cofactor.

The enzyme catalyses 2-C-methyl-D-erythritol 4-phosphate + NADP(+) = 1-deoxy-D-xylulose 5-phosphate + NADPH + H(+). It participates in isoprenoid biosynthesis; isopentenyl diphosphate biosynthesis via DXP pathway; isopentenyl diphosphate from 1-deoxy-D-xylulose 5-phosphate: step 1/6. In terms of biological role, catalyzes the NADPH-dependent rearrangement and reduction of 1-deoxy-D-xylulose-5-phosphate (DXP) to 2-C-methyl-D-erythritol 4-phosphate (MEP). The chain is 1-deoxy-D-xylulose 5-phosphate reductoisomerase from Corynebacterium diphtheriae (strain ATCC 700971 / NCTC 13129 / Biotype gravis).